The sequence spans 399 residues: Glutathione-independent formaldehyde dehydrogenase (399 aa).

Residue cysteine 47 participates in Zn(2+) binding. The NAD(+) site is built by glycine 48, serine 49, and histidine 52. 6 residues coordinate Zn(2+): histidine 68, cysteine 98, cysteine 101, cysteine 104, cysteine 112, and aspartate 170. Residues valine 198, aspartate 218, arginine 223, valine 263, arginine 268, histidine 270, proline 300, leucine 302, glycine 337, and threonine 339 each coordinate NAD(+).

The protein belongs to the zinc-containing alcohol dehydrogenase family. In terms of assembly, homotetramer. Zn(2+) serves as cofactor.

The enzyme catalyses formaldehyde + NAD(+) + H2O = formate + NADH + 2 H(+). The catalysed reaction is acetaldehyde + NAD(+) + H2O = acetate + NADH + 2 H(+). It carries out the reaction 2 formaldehyde + H2O = methanol + formate + H(+). Inactivated by bipyridine and p-chloromercuribenzoate. Dehydrogenase that catalyzes the NAD(+)-dependent oxidation of formaldehyde and acetaldehyde, and, to a lesser extent, long-chain alcohols, but is inactive against propionaldehyde, butyraldehyde, methanol and ethanol. Can also catalyze the dismutation of a wide range of aldehydes such as formaldehyde. The polypeptide is Glutathione-independent formaldehyde dehydrogenase (Pseudomonas putida (Arthrobacter siderocapsulatus)).